We begin with the raw amino-acid sequence, 143 residues long: Phosphoprotein 32 (143 aa).

A compositionally biased stretch (polar residues) spans 1-14 (MESSNINALQQPSS). Residues 1–32 (MESSNINALQQPSSIAHHPSKQCASSLNETVK) are disordered.

The protein belongs to the varicellovirus ORF32 protein family. Post-translationally, phosphorylated by ORF47 protein.

The sequence is that of Phosphoprotein 32 from Homo sapiens (Human).